The sequence spans 416 residues: MLLKLKCTVNNYAWGPKGNSSMAGSLALDGGHIPNLDKDKPYAEFWVGTHANGPAHVIEKDIALKQLLATSPELQGKHEKGNLSFLFKVLSVLGPLSIQIHPTKEQGKLLHATDPKNYPDDNHKPEIAIALTEFELLSGFRQHSQISEYLKLYSEIQELLTEEEKSQIDSLGSYGESSAQVLKKIFSRIWRTPKEKLQIVVDKLARRIQGHENKTALDEIIVYLFTLYPGDVGVFAPIFLNYFKLQPGEATFLEPNMPHAYLKGDCVECMADSDNTIRAGLTPKYIDVESLVEMLNYDETLLPKYIPNELDDGSLLFTPRGIDEFWVQEVKGPAGSIYQLPYSESCSVLTVLYGTATVTLGDASQVLNRGEVVFIGATHDAERPKINISDDFLAFRAFTPSPRALESLSNKRLIID.

The Zn(2+) site is built by glutamine 99, histidine 101, glutamate 126, and histidine 259. Arginine 278 is an active-site residue.

It belongs to the mannose-6-phosphate isomerase type 1 family. Zn(2+) is required as a cofactor.

The protein localises to the cytoplasm. It catalyses the reaction D-mannose 6-phosphate = D-fructose 6-phosphate. Its pathway is nucleotide-sugar biosynthesis; GDP-alpha-D-mannose biosynthesis; alpha-D-mannose 1-phosphate from D-fructose 6-phosphate: step 1/2. Functionally, involved in the synthesis of the GDP-mannose and dolichol-phosphate-mannose required for a number of critical mannosyl transfer reactions. The protein is Probable mannose-6-phosphate isomerase of Caenorhabditis elegans.